Reading from the N-terminus, the 505-residue chain is Protein disulfide-isomerase A3 (505 aa).

The first 24 residues, 1 to 24, serve as a signal peptide directing secretion; the sequence is MRLRRLALFPGVALLLAAARLAAA. The Thioredoxin 1 domain occupies 25 to 133; sequence SDVLELTDDN…IVSHLKKQAG (109 aa). Residues cysteine 57 and cysteine 60 each act as nucleophile in the active site. Residues cysteine 57 and cysteine 60 are joined by a disulfide bond. At lysine 61 the chain carries N6-methyllysine. A disulfide bridge links cysteine 85 with cysteine 92. Lysine 129 carries the post-translational modification N6-succinyllysine. Lysine 152 is subject to N6-acetyllysine. An N6-succinyllysine modification is found at lysine 218. Lysine 252 carries the post-translational modification N6-acetyllysine. Position 319 is a phosphothreonine (threonine 319). Residues 343 to 485 enclose the Thioredoxin 2 domain; it reads SRDGKALERF…FISYLQREAT (143 aa). Lysine 362 bears the N6-acetyllysine mark. Active-site nucleophile residues include cysteine 406 and cysteine 409. Cysteines 406 and 409 form a disulfide. The segment at 484 to 505 is disordered; it reads ATNPPVIQEEKPKKKKKAQEDL. Over residues 491 to 505 the composition is skewed to basic and acidic residues; the sequence is QEEKPKKKKKAQEDL. N6-acetyllysine is present on lysine 494. A Prevents secretion from ER motif is present at residues 502-505; sequence QEDL.

As to quaternary structure, part of the major histocompatibility complex class I (MHC I) peptide loading complex composed of TAP1, TAP2, B2M, MHC heavy chain, TAPBP, PDIA3, and CALR. Interacts with ERP27 and CANX. Interacts with SERPINA2 and with the S and Z variants of SERPINA1. Interacts with ATP2A2. In terms of processing, within the major histocompatibility complex class I (MHC I) peptide loading complex forms reversible disulfide-linked heterodimers with TAPBP as part of its protein folding chaperone activity. This is essential to assist the dynamic assembly of the MHC I complex with high affinity antigens in the endoplasmic reticulum. Phosphorylated. Detected in the flagellum and head region of spermatozoa (at protein level). Expressed in liver, stomach and colon (at protein level). Expressed in gastric parietal cells and chief cells (at protein level).

It is found in the endoplasmic reticulum. The protein localises to the endoplasmic reticulum lumen. The protein resides in the melanosome. It catalyses the reaction Catalyzes the rearrangement of -S-S- bonds in proteins.. With respect to regulation, association with calcitriol does not affect its enzymatic activity. Protein disulfide isomerase that catalyzes the formation, isomerization, and reduction or oxidation of disulfide bonds in client proteins and functions as a protein folding chaperone. Core component of the major histocompatibility complex class I (MHC I) peptide loading complex where it functions as an essential folding chaperone for TAPBP. Through TAPBP, assists the dynamic assembly of the MHC I complex with high affinity antigens in the endoplasmic reticulum. Therefore, plays a crucial role in the presentation of antigens to cytotoxic T cells in adaptive immunity. This is Protein disulfide-isomerase A3 from Homo sapiens (Human).